The following is a 135-amino-acid chain: uncharacterized protein (135 aa).

This is an uncharacterized protein from Commelina yellow mottle virus (CoYMV).